The following is a 555-amino-acid chain: Cilia- and flagella-associated protein 184 (555 aa).

Positions 1–12 are enriched in basic and acidic residues; it reads MDVSSEHTKDPG. Residues 1–202 are disordered; that stretch reads MDVSSEHTKD…KSQEEGKRLY (202 aa). Acidic residues-rich tracts occupy residues 41–54 and 95–105; these read GELE…EEEQ and PEPEEPAEVGA. Residues 106–117 show a composition bias toward low complexity; it reads EEPAQPEPGAGP. Residues 118–131 show a composition bias toward acidic residues; the sequence is EELEAEAGAEELEQ. Residues 174 to 202 show a composition bias toward basic and acidic residues; that stretch reads ETQRDGAESKERDGEGRPAKSQEEGKRLY. 2 coiled-coil regions span residues 305 to 441 and 505 to 531; these read YHQE…NSVQ and DSLL…LKRH.

This sequence belongs to the CFAP184 family. Forms a complex with CFAP263; the interaction is required for functional activity in cilia.

The protein resides in the cell projection. It localises to the cilium. The protein localises to the cytoplasm. It is found in the cytoskeleton. Its subcellular location is the microtubule organizing center. The protein resides in the centrosome. In complex with CFAP263, acts as a regulator of ciliary beating that connects radial spoke 3 (RS3) to the inner dynein arm (IDA) and the nexin-dynein regulatory complex (N-DRC). The complex is positioned parallel to N-DRC and forms a connection between the arch at the base of RS3, the IDA tail and N-DRC. This chain is Cilia- and flagella-associated protein 184, found in Homo sapiens (Human).